A 326-amino-acid polypeptide reads, in one-letter code: GTPase IMAP family member 5 (326 aa).

Over 1–297 (MEDHGFEELS…MLCRVTSCLD (297 aa)) the chain is Cytoplasmic. The AIG1-type G domain occupies 42–245 (SGLLRILLVG…HSNDLFVYTQ (204 aa)). Residues 51 to 59 (GKSGCGKSA), Ser-72, 169 to 171 (HKE), and Asn-206 each bind GTP. The chain crosses the membrane as a helical; Anchor for type IV membrane protein span at residues 298-318 (WHIAVSVLLIVLGLTLLITLI). Topologically, residues 319-326 (NMYIGRWK) are lumenal.

The protein belongs to the TRAFAC class TrmE-Era-EngA-EngB-Septin-like GTPase superfamily. AIG1/Toc34/Toc159-like paraseptin GTPase family. IAN subfamily. In terms of assembly, interacts with BAD, BAK1, BAX, BCL2, BCL2L1/Bcl-xL and BCL2L11/BimEL. The interaction with BAX is increased, when cells initiate apoptosis upon IL2 withdrawal. Forms a complex with BCL2L1 or MCL1 and HSPA8/HSC70; the interaction between HSPA8 and BCL2L1 or MCL1 is impaired in the absence of GIMAP5. May interact (via N-terminus) with microtubules. As to expression, primarily expressed in spleen, heart, lung and intestine and, at lower levels, in kidney, stomach and muscle. Expressed in thymus and lymph nodes (at protein level). In the spleen, expressed in periarteriolar lymphatic sheets. Isoform 2: Expressed at higher levels in T lymphocytes compared to isoform 1.

The protein localises to the lysosome membrane. The protein resides in the endosome. It is found in the multivesicular body membrane. It localises to the endosome membrane. In terms of biological role, required for mitochondrial integrity and T-cell survival. May contribute to T-cell quiescence. Its function is as follows. Plays a role in T lymphocyte development and the optimal generation of CD4/CD8 double-positive thymocytes. Inhibitor of GSK3A, possibly by sequestering GSK3A in cytoplasmic vesicles and impairing its translocation to the nucleus. Consequently, impairs GSK3A-dependent transcriptional program and regulation of the DNA damage response occurring during T cells proliferation. Required for the survival of peripheral T cells, natural killer (NK) and NK T-cell development and the maintenance of normal liver function. Promotes the survival of quiescent T-cells. May regulate Ca(2+) homeostasis by modulating lysosomal Ca(2+) stores, preventing its accumulation in the absence of T cell activation. May play a role in mitochondrial DNA segregation in hematopoietic tissues. Is a regulator of liver endothelial cell homeostasis. The chain is GTPase IMAP family member 5 (Gimap5) from Rattus norvegicus (Rat).